A 1125-amino-acid chain; its full sequence is MDAFGDYVWPRATSELILLPVTGLECVGDRLLAGEGPDLLVYNLDFGGHLRMVKRVQNLLGHYLIHGFRVQPEPKGDLDSEAMIAVFGSKGLRVVKISWGQSHLRELWRSGLWNMSDWIWDARWLEGNVALALGHNSVVLYDPVIGCMLQDVPCTDRCTLSSACLIGDTWKELTIVAGAVSNELLVWYPATALPDNKPVAPDRRVSGHVGVIFSMSYLESKGLLATASEDRSVRIWKVGDLRVPGGRVQNIGHCFGHSARVWQVKLLENYLISAGEDCVCLVWSHEGEILQAFRGHQGRGIRAIAAHERQTWVITGGDDSGIRLWHLVGRGYPGLGVSSLSFKSPSRPGALKAVTLAGSWRVLAVTDVGGLYLYDLEVKCWEQLLEDNRFQSYCLLEAAPGPEGFGLCALANGEGLVKVVPINTPTAAVDQNLFQGKVHSLSWALRGYEELLLLASGPGGVVACLEISAAPTGKAIFVKERCRYLLPPSKQRWHTCSAFLPPGDFLVCGDRRGSVLLFPARPCLFKKPGVGPKAITAAEAPQAGSSSGGSESVVTGLGPVSSLHSLHGKQGVTSVTCHGGYVYSTGRDGSYYQLFVHGGRLQPVLRQKACRGMNWIAGLRMAPDGSMVVLGFHANEFVVWSPRSHEKLHIVNCGGGHRSWAFSDTEAAMAFAYLKDGDVMLYRALGGCIRPNVILREGLHGREITCVKRVGTVTLGPEFEVPNLEHPDSLEPGSEGPGLIDIVITGSEDTTVCVLALPTTTGAAHALTAVCNHISSVRALAVWGVGTPGGPQDSHPGLTAQVVSAGGRAEMHCFSLMITPDASTPSRLACHIMHLSSHRLDEYWDRQRNRHRMIKVDPETRYMSLAICELDSDRPGLGPGPLVAAACSDGAVRLFLLQDSGRILHLLAETFHHKRCVLKVHSFTHEAPNQRRRLILCSAATDGSIAFWDLTTAMDRGSTTLEPPAHPGLPYQMGTPCLTVQAHSCGVNSLHTLPTPEGHHLVASGSEDGSLHVFTLAVKMPELEEADGEAELVPQLCVLDEYSVPCAHAAHVTGIKILSPKLMVSASIDQRLTFWRLGNGEPTFMNSTVYHVPDVADMDCWPVNPEFGHRCALAGQGLEVYNWYD.

The residue at position 1 (M1) is an N-acetylmethionine. 17 WD repeats span residues 89-130 (SKGL…GNVA), 155-197 (TDRC…PDNK), 207-246 (GHVG…VPGG), 256-294 (GHSA…QAFR), 295-335 (GHQG…YPGL), 346-384 (SRPG…WEQL), 433-475 (LFQG…TGKA), 489-528 (SKQR…FKKP), 567-605 (HGKQ…QPVL), 611-650 (RGMN…KLHI), 652-692 (NCGG…IRPN), 725-765 (EHPD…GAAH), 767-798 (LTAV…HPGL), 860-905 (TRYM…RILH), 912-958 (HHKR…DRGS), 982-1024 (AHSC…PELE), and 1047-1085 (AHAA…PTFM).

It belongs to the WD repeat WDR6 family. In terms of assembly, interacts with FTSJ1; the interaction is direct, and required for 2'-O-methylation of position 34 in substrate tRNAs. Interacts with IRS4. Interacts with STK11/LKB1. As to expression, expressed in hypothalamus, hippocampus, cerebrum cortex and cerebellum.

The protein resides in the cytoplasm. Its function is as follows. Together with methyltransferase FTSJ1, methylates the 2'-O-ribose of nucleotides at position 34 of the tRNA anticodon loop of substrate tRNAs. Required for the correct positioning of the substrate tRNA for methylation. Required to suppress amino acid starvation-induced autophagy. Enhances the STK11/LKB1-induced cell growth suppression activity. The protein is tRNA (34-2'-O)-methyltransferase regulator WDR6 (Wdr6) of Rattus norvegicus (Rat).